The following is a 966-amino-acid chain: Alpha-1,4 glucan phosphorylase L-1 isozyme, chloroplastic/amyloplastic (966 aa).

A chloroplast-targeting transit peptide spans M1–N50. Residue K812 is modified to N6-(pyridoxal phosphate)lysine.

The protein belongs to the glycogen phosphorylase family. Requires pyridoxal 5'-phosphate as cofactor. Tuber.

The protein resides in the plastid. It is found in the chloroplast. It localises to the amyloplast. It catalyses the reaction [(1-&gt;4)-alpha-D-glucosyl](n) + phosphate = [(1-&gt;4)-alpha-D-glucosyl](n-1) + alpha-D-glucose 1-phosphate. Its function is as follows. Phosphorylase is an important allosteric enzyme in carbohydrate metabolism. Enzymes from different sources differ in their regulatory mechanisms and in their natural substrates. However, all known phosphorylases share catalytic and structural properties. The chain is Alpha-1,4 glucan phosphorylase L-1 isozyme, chloroplastic/amyloplastic from Solanum tuberosum (Potato).